Reading from the N-terminus, the 213-residue chain is Uridine kinase (213 aa).

13 to 20 lines the ATP pocket; it reads GGSCSGKT.

This sequence belongs to the uridine kinase family.

The protein localises to the cytoplasm. The catalysed reaction is uridine + ATP = UMP + ADP + H(+). It carries out the reaction cytidine + ATP = CMP + ADP + H(+). It participates in pyrimidine metabolism; CTP biosynthesis via salvage pathway; CTP from cytidine: step 1/3. Its pathway is pyrimidine metabolism; UMP biosynthesis via salvage pathway; UMP from uridine: step 1/1. The protein is Uridine kinase (udk) of Mycoplasma pneumoniae (strain ATCC 29342 / M129 / Subtype 1) (Mycoplasmoides pneumoniae).